A 438-amino-acid chain; its full sequence is Fumarate hydratase class II (438 aa).

Substrate is bound by residues 76-78, 101-104, 111-113, and Thr159; these read SGT, HPND, and SSN. His160 acts as the Proton donor/acceptor in catalysis. Ser291 is a catalytic residue. Residues Ser292 and 297-299 contribute to the substrate site; that span reads KTN.

It belongs to the class-II fumarase/aspartase family. Fumarase subfamily. In terms of assembly, homotetramer.

It localises to the cytoplasm. It catalyses the reaction (S)-malate = fumarate + H2O. It functions in the pathway carbohydrate metabolism; tricarboxylic acid cycle; (S)-malate from fumarate: step 1/1. Involved in the TCA cycle. Catalyzes the stereospecific interconversion of fumarate to L-malate. This is Fumarate hydratase class II from Saccharolobus solfataricus (strain ATCC 35092 / DSM 1617 / JCM 11322 / P2) (Sulfolobus solfataricus).